We begin with the raw amino-acid sequence, 703 residues long: DNA ligase (703 aa).

NAD(+) is bound by residues 54-58, 103-104, and Glu132; these read DAEYD and SL. The active-site N6-AMP-lysine intermediate is the Lys134. Positions 155, 192, 308, and 332 each coordinate NAD(+). Residues Cys426, Cys429, Cys444, and Cys450 each contribute to the Zn(2+) site. A BRCT domain is found at 608-698; the sequence is EGPGPLDGVV…ADAARALAVP (91 aa).

It belongs to the NAD-dependent DNA ligase family. LigA subfamily. Mg(2+) serves as cofactor. Mn(2+) is required as a cofactor.

The catalysed reaction is NAD(+) + (deoxyribonucleotide)n-3'-hydroxyl + 5'-phospho-(deoxyribonucleotide)m = (deoxyribonucleotide)n+m + AMP + beta-nicotinamide D-nucleotide.. DNA ligase that catalyzes the formation of phosphodiester linkages between 5'-phosphoryl and 3'-hydroxyl groups in double-stranded DNA using NAD as a coenzyme and as the energy source for the reaction. It is essential for DNA replication and repair of damaged DNA. The protein is DNA ligase of Parafrankia sp. (strain EAN1pec).